The primary structure comprises 134 residues: DNA-binding protein inhibitor ID-2 (134 aa).

Ser14 and Ser25 each carry phosphoserine. Residues 23–75 (SRSKTPVDDPMSLLYNMNDCYSKLKELVPSIPQNKKVSKMEILQHVIDYILDL) form the bHLH domain. A Nuclear export signal motif is present at residues 106-115 (LNTDISILSL).

Interacts with GATA4 and NKX2-5. Interacts with NR0B2. Interacts with CLOCK and BMAL1. Interacts with IFI204. Interacts with NEDD9/HEF1. Interacts with ASB4; this interaction promotes ID2 proteasomal degradation. Ubiquitinated in a ASB4-depedent manner, leading to proteasomal degradation. In terms of processing, phosphorylated in vitro by CDK1, PKA and PKC.

Its subcellular location is the cytoplasm. It is found in the nucleus. Transcriptional regulator (lacking a basic DNA binding domain) which negatively regulates the basic helix-loop-helix (bHLH) transcription factors by forming heterodimers and inhibiting their DNA binding and transcriptional activity. Implicated in regulating a variety of cellular processes, including cellular growth, senescence, differentiation, apoptosis, angiogenesis, and neoplastic transformation. Inhibits skeletal muscle and cardiac myocyte differentiation. Regulates the circadian clock by repressing the transcriptional activator activity of the CLOCK-BMAL1 heterodimer. Restricts the CLOCK and BMAL1 localization to the cytoplasm. Plays a role in both the input and output pathways of the circadian clock: in the input component, is involved in modulating the magnitude of photic entrainment and in the output component, contributes to the regulation of a variety of liver clock-controlled genes involved in lipid metabolism. In Sus scrofa (Pig), this protein is DNA-binding protein inhibitor ID-2 (ID2).